A 5255-amino-acid polypeptide reads, in one-letter code: SCO-spondin (5255 aa).

A signal peptide spans 1–18 (MGIVATVLLWVVTEAARG). Residues 19–111 (RWCERTEQVT…ACCAGWSGPH (93 aa)) enclose the EMI domain. 4 N-linked (GlcNAc...) asparagine glycosylation sites follow: Asn97, Asn136, Asn156, and Asn255. In terms of domain architecture, VWFD 1 spans 192 to 358 (ASCTVWAGSR…PDANPELSCS (167 aa)). 2 disulfides stabilise this stretch: Cys194-Cys317 and Cys216-Cys357. A TIL 1 domain is found at 453-508 (CGHGQRYSDCVSSCPASCMAAGTAEEGHCRDDCASGCECTPGLLLDRGACIPQSAC). The VWFC 1 domain occupies 508–601 (CPCLHRGHIY…CGGHQPLSCL (94 aa)). Residues 546–717 (AECAVLGDLH…NKYRVSTDCP (172 aa)) enclose the VWFD 2 domain. Cystine bridges form between Cys548/Cys681, Cys570/Cys716, and Cys592/Cys600. Asn801 carries N-linked (GlcNAc...) asparagine glycosylation. Residues 809–868 (CRGGQVYQECSSPCGRTCADLRLDGASSCPSLDNICVSGCNCPEGPVLDDGGQCVPPGVC) enclose the TIL 2 domain. The VWFC 2 domain maps to 868 to 926 (CPCQHSSQLYPAGSKIRQGCNACMCTAGTWSCTDAPCPDAAFCPGDLVYVFGSCLRTCD). N-linked (GlcNAc...) asparagine glycans are attached at residues Asn931 and Asn972. The 171-residue stretch at 998–1168 (GTCVATGDPH…NSWRVSLLCP (171 aa)) folds into the VWFD 3 domain. Intrachain disulfides connect Cys1000–Cys1132, Cys1022–Cys1167, and Cys1043–Cys1050. The 57-residue stretch at 1263–1319 (CDGGQEYSACGPPCPQTCRNLGLELPEHCDTMSCLEGCFCPEGKVLHEGSCIDPAEC) folds into the TIL 3 domain. Residue Asn1340 is glycosylated (N-linked (GlcNAc...) asparagine). LDL-receptor class A domains lie at 1362 to 1398 (HCPD…EVCA), 1400 to 1436 (HCAP…RGCP), 1439 to 1477 (PCAP…AGCS), 1479 to 1515 (SCSV…RGCV), 1515 to 1551 (VCPA…AFCP), and 1555 to 1593 (TCAP…VRCM). Cystine bridges form between Cys1363/Cys1376, Cys1370/Cys1389, Cys1383/Cys1397, Cys1401/Cys1413, Cys1408/Cys1426, Cys1420/Cys1435, Cys1440/Cys1452, Cys1447/Cys1465, Cys1459/Cys1476, Cys1480/Cys1492, Cys1487/Cys1505, Cys1499/Cys1514, Cys1516/Cys1528, Cys1523/Cys1541, Cys1535/Cys1550, Cys1556/Cys1568, Cys1563/Cys1581, and Cys1575/Cys1592. Asn1610 carries N-linked (GlcNAc...) asparagine glycosylation. LDL-receptor class A domains lie at 1616-1652 (VCGP…LGCN), 1654-1693 (SCVL…DNCG), and 1699-1734 (PCPG…LACE). 3 disulfide bridges follow: Cys1617–Cys1629, Cys1624–Cys1642, and Cys1636–Cys1651. N-linked (GlcNAc...) asparagine glycosylation is present at Asn1652. 6 cysteine pairs are disulfide-bonded: Cys1655–Cys1668, Cys1662–Cys1681, Cys1675–Cys1692, Cys1700–Cys1711, Cys1706–Cys1724, and Cys1718–Cys1733. Asn1713 carries N-linked (GlcNAc...) asparagine glycosylation. Asn1743 carries N-linked (GlcNAc...) asparagine glycosylation. One can recognise an LDL-receptor class A 10 domain in the interval 1748-1790 (PCAEYSCRDGDCITFKQVCNGLPDCRDGDMASGWLPSDEWDCG). Cystine bridges form between Cys1749–Cys1759, Cys1754–Cys1772, Cys1766–Cys1789, Cys1801–Cys1837, Cys1805–Cys1842, and Cys1816–Cys1827. 2 consecutive TSP type-1 domains span residues 1789-1843 (CGQW…TACP) and 1845-1903 (DGAW…DGCP). Asn1856 is a glycosylation site (N-linked (GlcNAc...) asparagine). Intrachain disulfides connect Cys1857–Cys1897, Cys1861–Cys1902, and Cys1871–Cys1881. The TIL 4 domain occupies 1907–1961 (CPGGLQPRPCAPCPASCADLASRAPCRREQCTPGCWCAEGLVLDGERGCVRPREC). 2 EGF-like domains span residues 1919 to 1956 (CPAS…RGCV) and 1957 to 1983 (RPRE…CRLC). Residues 1961 to 2019 (CRCEVDGLRYWPGQRMKLNCRLCTCLDGQPRRCRHNPACSVSCSWSAWSPWGECLGPCG) enclose the VWFC 3 domain. The region spanning 2002–2058 (SCSWSAWSPWGECLGPCGVQSIQWSFRSPSHPGKHGTNRQCRGIYRKARRCQTEPCQ) is the TSP type-1 3 domain. 3 disulfide bridges follow: Cys2003/Cys2042, Cys2014/Cys2018, and Cys2052/Cys2057. In terms of domain architecture, VWFC 4 spans 2058 to 2120 (QECEHQGRSR…GKGDSCCFCA (63 aa)). N-linked (GlcNAc...) asparagine glycans are attached at residues Asn2125 and Asn2230. Cystine bridges form between Cys2162–Cys2310, Cys2328–Cys2339, Cys2335–Cys2352, and Cys2346–Cys2361. Positions 2162–2310 (CYSPLGIASL…IFLRAELLGC (149 aa)) constitute an F5/8 type C domain. The LDL-receptor class A 11 domain occupies 2327-2362 (PCGTGEFWCGVSCVTASRRCDGATDCPGGADEAGCE). Residues 2352–2373 (CPGGADEAGCEPPSSTTLPTHP) form a disordered region. The span at 2364–2373 (PSSTTLPTHP) shows a compositional bias: polar residues. LDL-receptor class A domains follow at residues 2481–2517 (LCPP…AHCG) and 2538–2574 (TCSP…SSCA). Disulfide bonds link Cys2482–Cys2494, Cys2489–Cys2507, Cys2501–Cys2516, Cys2539–Cys2551, Cys2546–Cys2564, Cys2558–Cys2573, Cys2576–Cys2612, Cys2587–Cys2591, Cys2622–Cys2627, Cys2642–Cys2679, Cys2646–Cys2684, and Cys2657–Cys2669. TSP type-1 domains lie at 2575 to 2628 (DCIL…RACP) and 2630 to 2685 (PGAW…QPCG). Positions 2708 to 2750 (PPCPQVCGDLSATSSCQSPCQEGCRCPPGLFLQEGTCVNASQC) constitute a TIL 5 domain. The N-linked (GlcNAc...) asparagine glycan is linked to Asn2746. 3 TSP type-1 domains span residues 2790 to 2844 (ACAW…TPCA), 2849 to 2903 (SSGW…APCP), and 2905 to 2958 (AGVW…RPCG). 9 disulfides stabilise this stretch: Cys2791–Cys2829, Cys2802–Cys2806, Cys2839–Cys2843, Cys2861–Cys2897, Cys2865–Cys2902, Cys2881–Cys2887, Cys2917–Cys2952, Cys2921–Cys2957, and Cys2932–Cys2942. Residues 2971–3020 (EECRHSEGRCPWICQDLGAGVACTAQCQPGCHCPAGLLLQNGTCVPPSHC) form the TIL 6 domain. 3 N-linked (GlcNAc...) asparagine glycosylation sites follow: Asn3011, Asn3042, and Asn3065. The 58-residue stretch at 3020-3077 (CLCHHRGHLYQPGDINALDTCNNCTCVTGQMVCSTETCPVPCTWSNWTAWSTCSHSCD) folds into the VWFC 5 domain. 2 TSP type-1 domains span residues 3060–3115 (PCTW…QPCR) and 3117–3158 (VAPW…APCP). Cystine bridges form between Cys3061–Cys3099, Cys3072–Cys3076, and Cys3109–Cys3114. Asn3136 is a glycosylation site (N-linked (GlcNAc...) asparagine). The 53-residue stretch at 3165–3217 (CPPGKQWQACAQGAASCAELSAAPPADGSCHPGCYCPPGALLLNNECVAEAAC) folds into the TIL 7 domain. The region spanning 3217-3275 (CPCAVDGVLYQPGDVVPQGCHNCSCIAGRVTNCSQEDCGDVDGPWTPWTPWSECSASCG) is the VWFC 6 domain. 2 N-linked (GlcNAc...) asparagine glycosylation sites follow: Asn3238 and Asn3248. Positions 3258–3309 (DGPWTPWTPWSECSASCGPGRQRRYRFCSAHPGVPCAEPQPQERPCARQPCH) constitute a TSP type-1 11 domain. 3 disulfide bridges follow: Cys3270/Cys3303, Cys3274/Cys3308, and Cys3285/Cys3293. 3 N-linked (GlcNAc...) asparagine glycosylation sites follow: Asn3350, Asn3366, and Asn3392. TSP type-1 domains follow at residues 3410–3475 (PGAW…PPCP) and 3477–3532 (DGAW…SSCP). Intrachain disulfides connect Cys3422-Cys3468, Cys3426-Cys3474, Cys3437-Cys3449, Cys3489-Cys3524, Cys3492-Cys3531, and Cys3502-Cys3514. Residues 3534–3589 (CAGGLVAFTCGKPCPHSCEDLREDTACMATPRCLPACACPHGQLLQDGDCVPPELC) form the TIL 8 domain. N-linked (GlcNAc...) asparagine glycosylation is found at Asn3598 and Asn3625. TSP type-1 domains follow at residues 3644-3700 (DGGW…EGCP) and 3702-3751 (EEPW…HVCR). Cystine bridges form between Cys3656–Cys3693, Cys3660–Cys3699, Cys3671–Cys3683, Cys3714–Cys3745, Cys3718–Cys3750, and Cys3729–Cys3735. 2 N-linked (GlcNAc...) asparagine glycosylation sites follow: Asn3823 and Asn3869. TSP type-1 domains are found at residues 3878-3934 (DGGF…PECP), 3951-4004 (EEGF…PLCS), 4018-4074 (NCSW…QACK), and 4076-4131 (DGAW…QPCD). Disulfide bonds link Cys3890-Cys3928, Cys3894-Cys3933, Cys3906-Cys3918, Cys3963-Cys3998, Cys3967-Cys4003, and Cys3982-Cys3988. A disordered region spans residues 3932-3951 (ECPAVPTTEPGPGVAGAEEE). An N-linked (GlcNAc...) asparagine glycan is attached at Asn4018. Intrachain disulfides connect Cys4019–Cys4055, Cys4030–Cys4034, Cys4068–Cys4073, Cys4088–Cys4125, Cys4092–Cys4130, and Cys4103–Cys4115. Residues 4134–4189 (CPPGMALVTCANHCPRHCGDLQEGIVCREEEHCEPGCRCPNGTLEQDGGCVPLAHC) form the TIL 9 domain. N-linked (GlcNAc...) asparagine glycosylation is found at Asn4174 and Asn4211. 3 consecutive TSP type-1 domains span residues 4230–4282 (RCPW…GPCP), 4322–4384 (GAEH…RPCP), and 4386–4433 (ECSW…SGCS). Cystine bridges form between Cys4231-Cys4266, Cys4242-Cys4246, and Cys4276-Cys4281. N-linked (GlcNAc...) asparagine glycosylation is present at Asn4362. 3 disulfide bridges follow: Cys4387–Cys4417, Cys4398–Cys4400, and Cys4427–Cys4432. A glycan (N-linked (GlcNAc...) asparagine) is linked at Asn4428. The TIL 10 domain maps to 4437–4492 (CEPPFEFQPCSPPCARLCSTLQHPELCPAQSHCLPGCFCPQGLLEQRSACVPPEQC). Asn4498 carries an N-linked (GlcNAc...) asparagine glycan. 2 TSP type-1 domains span residues 4537 to 4608 (LPLS…DICQ) and 4610 to 4662 (LCLW…AVCP). 6 disulfides stabilise this stretch: Cys4548–Cys4601, Cys4551–Cys4607, Cys4575–Cys4591, Cys4611–Cys4646, Cys4622–Cys4626, and Cys4656–Cys4661. The TIL 11 domain occupies 4675-4722 (TTCANSCPRACADLWQHVECVQGGCKPGCRCPQGQLLQDGLCVPTAQC). 3 N-linked (GlcNAc...) asparagine glycosylation sites follow: Asn4730, Asn4747, and Asn4752. TSP type-1 domains lie at 4762–4815 (CPSY…QPCP) and 4817–4869 (GCQL…HNCT). Intrachain disulfides connect Cys4774–Cys4809, Cys4778–Cys4814, Cys4789–Cys4798, Cys4818–Cys4852, Cys4829–Cys4833, and Cys4863–Cys4868. Asn4867 carries an N-linked (GlcNAc...) asparagine glycan. The 55-residue stretch at 4872–4926 (CPRSQVHRECANACPHACADLRPQTQCLPQPCQPGCACPPGQVLQDGACVPPEEC) folds into the TIL 12 domain. N-linked (GlcNAc...) asparagine glycosylation is found at Asn4939 and Asn4970. The TSP type-1 27 domain occupies 4979-5033 (DCLWSPWSPWSPCSVTCGMGERLSHRHPLRQRLYEGAECLGPPVRRAACHLPDCA). 3 disulfides stabilise this stretch: Cys4980–Cys5017, Cys4991–Cys4995, and Cys5027–Cys5032. Residues Asn5081, Asn5122, and Asn5169 are each glycosylated (N-linked (GlcNAc...) asparagine). One can recognise a VWFC 7 domain in the interval 5092–5150 (CECLHQGQLHQPGSEWQEQCARCRCVDGKANCTDGCTPLSCPEGEVKVREPGRCCPVCR). Disulfide bonds link Cys5161/Cys5209, Cys5175/Cys5226, Cys5185/Cys5242, and Cys5189/Cys5244. The CTCK domain occupies 5161–5248 (CRRFTELRNI…IHSCECSSCQ (88 aa)).

The protein belongs to the thrombospondin family.

It localises to the secreted. Its subcellular location is the extracellular space. Functionally, involved in the modulation of neuronal aggregation. May be involved in developmental events during the formation of the central nervous system. In Gallus gallus (Chicken), this protein is SCO-spondin (SSPO).